The chain runs to 92 residues: Protein S100-B (92 aa).

At S2 the chain carries Blocked amino end (Ser); alternate. Residue S2 is modified to N-acetylserine; alternate. 2 EF-hand domains span residues 13–48 (DVFH…LEEI) and 49–84 (KEQE…VTTA). H16 lines the Zn(2+) pocket. Residues S19, E22, and D24 each coordinate Ca(2+). H26 is a Zn(2+) binding site. The Ca(2+) site is built by K27, E32, D62, D64, D66, E68, and E73. Residues H86 and H91 each contribute to the Zn(2+) site.

Belongs to the S-100 family. As to quaternary structure, dimer of either two alpha chains, or two beta chains, or one alpha and one beta chain. The S100B dimer binds two molecules of STK38. Interacts with CACYBP in a calcium-dependent manner. Interacts with ATAD3A; this interaction probably occurs in the cytosol prior to ATAD3A mitochondrial targeting. Interacts with S100A6. The S100B dimer interacts with two molecules of CAPZA1. Interacts with AGER. Interacts with PPP5C (via TPR repeats); the interaction is calcium-dependent and modulates PPP5C activity. Interacts with TPPP; this interaction inhibits TPPP dimerization. Interacts with isoform CLSTN3beta of CLSTN3; interaction promotes secretion. In terms of tissue distribution, although predominant among the water-soluble brain proteins, S100 is also found in a variety of other tissues.

It is found in the cytoplasm. The protein localises to the nucleus. Its subcellular location is the secreted. Functionally, small zinc- and- and calcium-binding protein that is highly expressed in astrocytes and constitutes one of the most abundant soluble proteins in brain. Weakly binds calcium but binds zinc very tightly-distinct binding sites with different affinities exist for both ions on each monomer. Physiological concentrations of potassium ion antagonize the binding of both divalent cations, especially affecting high-affinity calcium-binding sites. Acts as a neurotrophic factor that promotes astrocytosis and axonal proliferation. Involved in innervation of thermogenic adipose tissue by acting as an adipocyte-derived neurotrophic factor that promotes sympathetic innervation of adipose tissue. Binds to and initiates the activation of STK38 by releasing autoinhibitory intramolecular interactions within the kinase. Interaction with AGER after myocardial infarction may play a role in myocyte apoptosis by activating ERK1/2 and p53/TP53 signaling. Could assist ATAD3A cytoplasmic processing, preventing aggregation and favoring mitochondrial localization. May mediate calcium-dependent regulation on many physiological processes by interacting with other proteins, such as TPR-containing proteins, and modulating their activity. The chain is Protein S100-B from Homo sapiens (Human).